Here is a 220-residue protein sequence, read N- to C-terminus: MPEPIAFDESQVDISSIDFSDLEAKYHVPEPEHSYEHFVICDGAPIAPEAKAPVLKKVLTKLFSQCGKVVDMFMPLENGQTKGFLIIELDSAAAADKAVKQLNGKKLDVKHRLAVNKLPDMEKYALNDNISEEFREPAIPEFRSHGYLKSWLLDPNGREQFMLHHHDTVGVYWYKKNIQPEEVIEPRAHWTSASMKFSPKGTYLFSFFPGGVQAWGGERI.

Residues 1–94 are sufficient for interaction with HCR1 and TIF32; sequence MPEPIAFDES…LIIELDSAAA (94 aa). The interval 1 to 220 is sufficient for interaction with PIC8; that stretch reads MPEPIAFDES…GVQAWGGERI (220 aa). The RRM domain occupies 37-120; that stretch reads HFVICDGAPI…HRLAVNKLPD (84 aa).

This sequence belongs to the eIF-3 subunit B family. Component of the eukaryotic translation initiation factor 3 (eIF-3) complex.

The protein localises to the cytoplasm. Its function is as follows. RNA-binding component of the eukaryotic translation initiation factor 3 (eIF-3) complex, which is involved in protein synthesis of a specialized repertoire of mRNAs and, together with other initiation factors, stimulates binding of mRNA and methionyl-tRNAi to the 40S ribosome. The eIF-3 complex specifically targets and initiates translation of a subset of mRNAs involved in cell proliferation. This chain is Eukaryotic translation initiation factor 3 subunit B (TIF32), found in Pichia angusta (Yeast).